A 356-amino-acid chain; its full sequence is uncharacterized protein (356 aa).

Residues 8 to 28 (ILGFVLFVLGAAIFLTEVMHS) traverse the membrane as a helical segment.

This sequence to C.elegans C41C4.1 and C18B2.1.

The protein resides in the membrane. This is an uncharacterized protein from Caenorhabditis elegans.